Consider the following 463-residue polypeptide: Probable multidrug resistance protein YoeA (463 aa).

The next 12 helical transmembrane spans lie at 24-44 (LFLV…LVGM), 56-76 (VAAV…TIGI), 106-126 (FTFL…LDIL), 143-163 (ARIL…TTFL), 177-197 (IVST…MFGF), 202-222 (IYGS…VLMV), 256-276 (VPAS…ISFV), 293-313 (VASY…IFAA), 330-350 (VGIW…YVFS), 370-390 (LLMI…ISAT), 397-417 (VLWP…PVAF), and 427-447 (ILGV…LIYG).

It belongs to the multi antimicrobial extrusion (MATE) (TC 2.A.66.1) family.

The protein localises to the cell membrane. This is Probable multidrug resistance protein YoeA (yoeA) from Bacillus subtilis (strain 168).